We begin with the raw amino-acid sequence, 233 residues long: Orotidine 5'-phosphate decarboxylase (233 aa).

Residues D9, K31, 58-67, T120, R182, Q191, G211, and R212 each bind substrate; that span reads DLKLHDIPNT. K60 acts as the Proton donor in catalysis.

Belongs to the OMP decarboxylase family. Type 1 subfamily. In terms of assembly, homodimer.

It carries out the reaction orotidine 5'-phosphate + H(+) = UMP + CO2. It participates in pyrimidine metabolism; UMP biosynthesis via de novo pathway; UMP from orotate: step 2/2. Its function is as follows. Catalyzes the decarboxylation of orotidine 5'-monophosphate (OMP) to uridine 5'-monophosphate (UMP). This Listeria monocytogenes serotype 4a (strain HCC23) protein is Orotidine 5'-phosphate decarboxylase.